Reading from the N-terminus, the 160-residue chain is Putative NrdI-like protein (160 aa).

The protein belongs to the NrdI family.

This Streptococcus pyogenes serotype M1 protein is Putative NrdI-like protein.